The following is a 355-amino-acid chain: Methylthioribose-1-phosphate isomerase (355 aa).

Residues 47–49 (RGA), Arg91, and Gln199 contribute to the substrate site. Asp240 acts as the Proton donor in catalysis. Residue 250–251 (NK) coordinates substrate.

The protein belongs to the eIF-2B alpha/beta/delta subunits family. MtnA subfamily.

The catalysed reaction is 5-(methylsulfanyl)-alpha-D-ribose 1-phosphate = 5-(methylsulfanyl)-D-ribulose 1-phosphate. The protein operates within amino-acid biosynthesis; L-methionine biosynthesis via salvage pathway; L-methionine from S-methyl-5-thio-alpha-D-ribose 1-phosphate: step 1/6. In terms of biological role, catalyzes the interconversion of methylthioribose-1-phosphate (MTR-1-P) into methylthioribulose-1-phosphate (MTRu-1-P). The protein is Methylthioribose-1-phosphate isomerase of Oleidesulfovibrio alaskensis (strain ATCC BAA-1058 / DSM 17464 / G20) (Desulfovibrio alaskensis).